Reading from the N-terminus, the 305-residue chain is UDP-3-O-acyl-N-acetylglucosamine deacetylase (305 aa).

Positions 79, 238, and 242 each coordinate Zn(2+). Residue H265 is the Proton donor of the active site.

This sequence belongs to the LpxC family. Zn(2+) is required as a cofactor.

The catalysed reaction is a UDP-3-O-[(3R)-3-hydroxyacyl]-N-acetyl-alpha-D-glucosamine + H2O = a UDP-3-O-[(3R)-3-hydroxyacyl]-alpha-D-glucosamine + acetate. It participates in glycolipid biosynthesis; lipid IV(A) biosynthesis; lipid IV(A) from (3R)-3-hydroxytetradecanoyl-[acyl-carrier-protein] and UDP-N-acetyl-alpha-D-glucosamine: step 2/6. Catalyzes the hydrolysis of UDP-3-O-myristoyl-N-acetylglucosamine to form UDP-3-O-myristoylglucosamine and acetate, the committed step in lipid A biosynthesis. The sequence is that of UDP-3-O-acyl-N-acetylglucosamine deacetylase from Klebsiella pneumoniae (strain 342).